The sequence spans 64 residues: Large ribosomal subunit protein uL30 (64 aa).

Positions Met-1 to Ser-22 are disordered.

The protein belongs to the universal ribosomal protein uL30 family. In terms of assembly, part of the 50S ribosomal subunit.

The protein is Large ribosomal subunit protein uL30 of Nitrobacter winogradskyi (strain ATCC 25391 / DSM 10237 / CIP 104748 / NCIMB 11846 / Nb-255).